Here is a 463-residue protein sequence, read N- to C-terminus: Aromatic amino acid transport protein AroP (463 aa).

12 consecutive transmembrane segments (helical) span residues 18–38, 40–60, 84–104, 117–137, 157–177, 200–220, 237–257, 276–296, 337–357, 358–378, 402–422, and 431–451; these read TMMG…GVGI, AAGP…VLVM, FGHW…IMVM, AWFG…FAVV, VAVI…WLPG, VAAG…VTIA, AVIW…TFLM, ILAM…IVLA, AVLL…WNPA, GLLD…WAMI, AHPW…ALML, and VYSV…TVNS.

It belongs to the amino acid-polyamine-organocation (APC) superfamily. Amino acid transporter (AAT) (TC 2.A.3.1) family.

The protein localises to the cell membrane. It carries out the reaction L-phenylalanine(in) + H(+)(in) = L-phenylalanine(out) + H(+)(out). The catalysed reaction is L-tryptophan(in) + H(+)(in) = L-tryptophan(out) + H(+)(out). It catalyses the reaction L-tyrosine(in) + H(+)(in) = L-tyrosine(out) + H(+)(out). Permease that is involved in the active transport across the cytoplasmic membrane of all three aromatic amino acids, phenylalanine, tyrosine and tryptophan. This is Aromatic amino acid transport protein AroP from Corynebacterium glutamicum (strain ATCC 13032 / DSM 20300 / JCM 1318 / BCRC 11384 / CCUG 27702 / LMG 3730 / NBRC 12168 / NCIMB 10025 / NRRL B-2784 / 534).